A 113-amino-acid chain; its full sequence is Large ribosomal subunit protein uL22 (113 aa).

Belongs to the universal ribosomal protein uL22 family. In terms of assembly, part of the 50S ribosomal subunit.

In terms of biological role, this protein binds specifically to 23S rRNA; its binding is stimulated by other ribosomal proteins, e.g. L4, L17, and L20. It is important during the early stages of 50S assembly. It makes multiple contacts with different domains of the 23S rRNA in the assembled 50S subunit and ribosome. Functionally, the globular domain of the protein is located near the polypeptide exit tunnel on the outside of the subunit, while an extended beta-hairpin is found that lines the wall of the exit tunnel in the center of the 70S ribosome. The polypeptide is Large ribosomal subunit protein uL22 (Anoxybacillus flavithermus (strain DSM 21510 / WK1)).